The following is a 173-amino-acid chain: MLNDPLVQEVLFNIFEGDEKGFEVIDVLLEKGETTEEEIAKELGVKLNVVRKLLYKLYDARLVDYKRWKDEDTNWYSYTWLPTLEKLPYVVKKKINELIKDLEKKLEFEKNNMFFFCPNCNVRFTFEEAMDYGFSCPGCGNMLQEFDNSELIKDLEEQIKFLKEELKNNPFLK.

The HTH TFE/IIEalpha-type domain maps to 3–88; sequence NDPLVQEVLF…TWLPTLEKLP (86 aa).

This sequence belongs to the TFE family. Monomer. Interaction with RNA polymerase subunits RpoF and RpoE is necessary for Tfe stimulatory transcription activity. Able to interact with RNA polymerase in the absence of Tbp or DNA promoter. Interacts both with the preinitiation and elongation complexes.

In terms of biological role, transcription factor that plays a role in the activation of archaeal genes transcribed by RNA polymerase. Facilitates transcription initiation by enhancing TATA-box recognition by TATA-box-binding protein (Tbp), and transcription factor B (Tfb) and RNA polymerase recruitment. Not absolutely required for transcription in vitro, but particularly important in cases where Tbp or Tfb function is not optimal. It dynamically alters the nucleic acid-binding properties of RNA polymerases by stabilizing the initiation complex and destabilizing elongation complexes. Seems to translocate with the RNA polymerase following initiation and acts by binding to the non template strand of the transcription bubble in elongation complexes. The polypeptide is Transcription factor E (tfe) (Methanocaldococcus jannaschii (strain ATCC 43067 / DSM 2661 / JAL-1 / JCM 10045 / NBRC 100440) (Methanococcus jannaschii)).